Reading from the N-terminus, the 59-residue chain is Large ribosomal subunit protein uL30 (59 aa).

It belongs to the universal ribosomal protein uL30 family. Part of the 50S ribosomal subunit.

The polypeptide is Large ribosomal subunit protein uL30 (Solidesulfovibrio magneticus (strain ATCC 700980 / DSM 13731 / RS-1) (Desulfovibrio magneticus)).